A 200-amino-acid polypeptide reads, in one-letter code: Ras-related protein RABF2b (200 aa).

Position 17–25 (Gly-17–Ser-25) interacts with GTP. Positions Gln-39 to Phe-47 match the Effector region motif. GTP contacts are provided by residues Asp-65–Gln-69, Asn-123–Asp-126, and Ser-153–Ala-154. S-geranylgeranyl cysteine attachment occurs at residues Cys-198 and Cys-199.

The protein belongs to the small GTPase superfamily. Rab family. As to quaternary structure, interacts with VPS9A homodimer. Interacts with TCTP1. Interacts with MON1. Interacts with EREX (via PX domain). Binds to VPS3. As to expression, expressed in roots and actively dividing cells.

The protein resides in the early endosome membrane. It is found in the endosome membrane. Its subcellular location is the prevacuolar compartment membrane. The protein localises to the endosome. It localises to the multivesicular body membrane. The protein resides in the cell membrane. It is found in the cytoplasm. With respect to regulation, regulated by guanine nucleotide exchange factors (GEFs) which promote the exchange of bound GDP for free GTP. Functionally, endosomal protein that may be involved in endocytosis. Involved in the trafficking of proteins from prevacuolar compartments (PVCs) to vacuoles. May activate the MON1-CCZ1 complex which acts as guanine nucleotide exchange factors (GEF) for Rab7 protein family, and serves as a link between Rab5 and Rab7 families in PVCs, and mediates PVC maturation. Involved in vacuolar transport of storage proteins with EREX as effector. Regulates membrane trafficking to protein storage vacuoles (PSVs). The sequence is that of Ras-related protein RABF2b from Arabidopsis thaliana (Mouse-ear cress).